We begin with the raw amino-acid sequence, 208 residues long: Guanylate kinase (208 aa).

One can recognise a Guanylate kinase-like domain in the interval 4–185 (GNLYILSAPS…ALADFQAILR (182 aa)). 11–18 (APSGAGKS) provides a ligand contact to ATP.

Belongs to the guanylate kinase family.

The protein resides in the cytoplasm. It catalyses the reaction GMP + ATP = GDP + ADP. In terms of biological role, essential for recycling GMP and indirectly, cGMP. In Pasteurella multocida (strain Pm70), this protein is Guanylate kinase (gmk).